The chain runs to 233 residues: Large ribosomal subunit protein uL2 (233 aa).

The segment at 194-233 is disordered; it reads HPHGGGNHQHVGRPSTVGRGTPPGRKVGRLSPKRRKKYGR. Over residues 219–233 the composition is skewed to basic residues; it reads KVGRLSPKRRKKYGR.

The protein belongs to the universal ribosomal protein uL2 family. In terms of assembly, part of the 50S ribosomal subunit. Forms a bridge to the 30S subunit in the 70S ribosome.

In terms of biological role, one of the primary rRNA binding proteins. Required for association of the 30S and 50S subunits to form the 70S ribosome, for tRNA binding and peptide bond formation. It has been suggested to have peptidyltransferase activity; this is somewhat controversial. Makes several contacts with the 16S rRNA in the 70S ribosome. This is Large ribosomal subunit protein uL2 from Picrophilus torridus (strain ATCC 700027 / DSM 9790 / JCM 10055 / NBRC 100828 / KAW 2/3).